A 243-amino-acid chain; its full sequence is Putative glycerophosphodiester phosphodiesterase YhdW (243 aa).

The GP-PDE domain occupies M1–G238. The active-site Proton acceptor is H6. Residues E33 and D35 each coordinate Ca(2+). H48 serves as the catalytic Proton donor. E107 is a Ca(2+) binding site.

This sequence belongs to the glycerophosphoryl diester phosphodiesterase family. It depends on Ca(2+) as a cofactor.

The catalysed reaction is a sn-glycero-3-phosphodiester + H2O = an alcohol + sn-glycerol 3-phosphate + H(+). Glycerophosphodiester phosphodiesterase hydrolyzes glycerophosphodiesters into glycerol-3-phosphate (G3P) and the corresponding alcohol. The chain is Putative glycerophosphodiester phosphodiesterase YhdW (yhdW) from Bacillus subtilis (strain 168).